The sequence spans 57 residues: UPF0391 membrane protein XC_2938 (57 aa).

2 helical membrane-spanning segments follow: residues 4–24 and 33–53; these read WAIIFAIIGLIAGALGFGGMA and FLFWAGIIIAIVLFVLGMTIA.

The protein belongs to the UPF0391 family.

Its subcellular location is the cell membrane. The polypeptide is UPF0391 membrane protein XC_2938 (Xanthomonas campestris pv. campestris (strain 8004)).